We begin with the raw amino-acid sequence, 1047 residues long: FACT complex subunit SPT16 (1047 aa).

Alanine 2 carries the post-translational modification N-acetylalanine. Position 139 is an N6-acetyllysine (lysine 139). Serine 188 is subject to Phosphoserine. Residues lysine 196 and lysine 223 each carry the N6-acetyllysine modification. A coiled-coil region spans residues 432-507; the sequence is LKNEDEEEEE…GEQQIQKARK (76 aa). Serine 455 carries the phosphoserine modification. Residues 492–518 form a disordered region; that stretch reads RLTEQKGEQQIQKARKSNVSYKNPSLM. Lysine 497 participates in a covalent cross-link: Glycyl lysine isopeptide (Lys-Gly) (interchain with G-Cter in SUMO2). The segment covering 499–514 has biased composition (polar residues); that stretch reads EQQIQKARKSNVSYKN. Serine 508 carries the phosphoserine modification. Lysine 513 carries the N6-acetyllysine; alternate modification. Lysine 513 participates in a covalent cross-link: Glycyl lysine isopeptide (Lys-Gly) (interchain with G-Cter in SUMO2); alternate. Residue lysine 647 forms a Glycyl lysine isopeptide (Lys-Gly) (interchain with G-Cter in SUMO2) linkage. Phosphoserine occurs at positions 650 and 658. Residues lysine 732 and lysine 786 each carry the N6-acetyllysine modification. Threonine 903 is subject to Phosphothreonine. Residue lysine 904 is modified to N6-acetyllysine. Residues 918 to 1047 form a disordered region; it reads EQGGWSFLEP…SSAPPKKKRK (130 aa). A compositionally biased stretch (acidic residues) spans 927-973; sequence PEGEGSDAEEGDSESEIEDETFNPSEDDYEEEEEDSDEDYSSEAEES. 4 positions are modified to phosphoserine: serine 979, serine 982, serine 986, and serine 1015. The span at 985–1005 shows a compositional bias: basic and acidic residues; it reads ESGKDWDELEEEARKADRESR. Residues 1024–1039 show a composition bias toward low complexity; it reads VHSSGRGSNRGSRHSS.

It belongs to the peptidase M24 family. SPT16 subfamily. Interacts with MYOG (via C-terminal region). Component of the FACT complex, a stable heterodimer of SSRP1 and SUPT16H. Also a component of a CK2-SPT16-SSRP1 complex which forms following UV irradiation, composed of SSRP1, SUPT16H, CSNK2A1, CSNK2A2 and CSNK2B. Interacts with NEK9. Binds to histone H2A-H2B. Identified in a centromere complex containing histones H2A, H2B and H4, and at least CENPA, CENPB, CENPC, CENPT, CENPN, HJURP, SUPT16H, SSRP1 and RSF1. Interacts with GTF2E2. As to quaternary structure, (Microbial infection) Interacts with Herpes simplex virus 1 (HHV-1) protein ICP22; this interaction relocalizes the FACT complex to viral genomes in infected cells. ADP-ribosylated. ADP-ribosylation by PARP1 is induced by genotoxic stress and correlates with dissociation of FACT from chromatin. Ubiquitous.

The protein localises to the nucleus. It localises to the chromosome. Its function is as follows. Component of the FACT complex, a general chromatin factor that acts to reorganize nucleosomes. The FACT complex is involved in multiple processes that require DNA as a template such as mRNA elongation, DNA replication and DNA repair. During transcription elongation the FACT complex acts as a histone chaperone that both destabilizes and restores nucleosomal structure. It facilitates the passage of RNA polymerase II and transcription by promoting the dissociation of one histone H2A-H2B dimer from the nucleosome, then subsequently promotes the reestablishment of the nucleosome following the passage of RNA polymerase II. The FACT complex is probably also involved in phosphorylation of 'Ser-392' of p53/TP53 via its association with CK2 (casein kinase II). This Homo sapiens (Human) protein is FACT complex subunit SPT16 (SUPT16H).